Here is a 438-residue protein sequence, read N- to C-terminus: Histidinol dehydrogenase (438 aa).

NAD(+) contacts are provided by tyrosine 135, glutamine 193, and asparagine 216. 3 residues coordinate substrate: serine 243, glutamine 265, and histidine 268. Positions 265 and 268 each coordinate Zn(2+). Residues glutamate 332 and histidine 333 each act as proton acceptor in the active site. The substrate site is built by histidine 333, aspartate 366, glutamate 420, and histidine 425. Residue aspartate 366 participates in Zn(2+) binding. Histidine 425 contributes to the Zn(2+) binding site.

The protein belongs to the histidinol dehydrogenase family. Zn(2+) serves as cofactor.

It catalyses the reaction L-histidinol + 2 NAD(+) + H2O = L-histidine + 2 NADH + 3 H(+). The protein operates within amino-acid biosynthesis; L-histidine biosynthesis; L-histidine from 5-phospho-alpha-D-ribose 1-diphosphate: step 9/9. Functionally, catalyzes the sequential NAD-dependent oxidations of L-histidinol to L-histidinaldehyde and then to L-histidine. The protein is Histidinol dehydrogenase of Shewanella oneidensis (strain ATCC 700550 / JCM 31522 / CIP 106686 / LMG 19005 / NCIMB 14063 / MR-1).